The sequence spans 1070 residues: DNA-directed RNA polymerase subunit beta (1070 aa).

The protein belongs to the RNA polymerase beta chain family. In terms of assembly, in plastids the minimal PEP RNA polymerase catalytic core is composed of four subunits: alpha, beta, beta', and beta''. When a (nuclear-encoded) sigma factor is associated with the core the holoenzyme is formed, which can initiate transcription.

The protein resides in the plastid. It is found in the chloroplast. The enzyme catalyses RNA(n) + a ribonucleoside 5'-triphosphate = RNA(n+1) + diphosphate. In terms of biological role, DNA-dependent RNA polymerase catalyzes the transcription of DNA into RNA using the four ribonucleoside triphosphates as substrates. This chain is DNA-directed RNA polymerase subunit beta, found in Populus trichocarpa (Western balsam poplar).